Reading from the N-terminus, the 158-residue chain is Transcription elongation factor GreA (158 aa).

The protein belongs to the GreA/GreB family.

Functionally, necessary for efficient RNA polymerase transcription elongation past template-encoded arresting sites. The arresting sites in DNA have the property of trapping a certain fraction of elongating RNA polymerases that pass through, resulting in locked ternary complexes. Cleavage of the nascent transcript by cleavage factors such as GreA or GreB allows the resumption of elongation from the new 3'terminus. GreA releases sequences of 2 to 3 nucleotides. The polypeptide is Transcription elongation factor GreA (Psychrobacter arcticus (strain DSM 17307 / VKM B-2377 / 273-4)).